A 110-amino-acid chain; its full sequence is UPF0213 protein DVU_3309 (110 aa).

One can recognise a GIY-YIG domain in the interval 8 to 83 (EVWFVYLLRC…KRQPTDQKLA (76 aa)).

Belongs to the UPF0213 family.

This Nitratidesulfovibrio vulgaris (strain ATCC 29579 / DSM 644 / CCUG 34227 / NCIMB 8303 / VKM B-1760 / Hildenborough) (Desulfovibrio vulgaris) protein is UPF0213 protein DVU_3309.